We begin with the raw amino-acid sequence, 371 residues long: Phospho-N-acetylmuramoyl-pentapeptide-transferase (371 aa).

Transmembrane regions (helical) follow at residues 21–41 (NHIL…DFYY), 46–66 (LTIP…IGIP), 92–112 (PTMG…ILYF), 119–139 (IILT…IDDF), 156–176 (ILLQ…NNLI), 182–202 (IANK…FVLL), 216–236 (GLLS…ILIE), 241–261 (NSTL…FLFL), 268–288 (LFMG…IALI), 296–316 (LIMG…VSIF), and 349–369 (IVSS…IFLI).

This sequence belongs to the glycosyltransferase 4 family. MraY subfamily. Requires Mg(2+) as cofactor.

The protein resides in the cell inner membrane. It carries out the reaction UDP-N-acetyl-alpha-D-muramoyl-L-alanyl-gamma-D-glutamyl-meso-2,6-diaminopimeloyl-D-alanyl-D-alanine + di-trans,octa-cis-undecaprenyl phosphate = di-trans,octa-cis-undecaprenyl diphospho-N-acetyl-alpha-D-muramoyl-L-alanyl-D-glutamyl-meso-2,6-diaminopimeloyl-D-alanyl-D-alanine + UMP. The protein operates within cell wall biogenesis; peptidoglycan biosynthesis. Functionally, catalyzes the initial step of the lipid cycle reactions in the biosynthesis of the cell wall peptidoglycan: transfers peptidoglycan precursor phospho-MurNAc-pentapeptide from UDP-MurNAc-pentapeptide onto the lipid carrier undecaprenyl phosphate, yielding undecaprenyl-pyrophosphoryl-MurNAc-pentapeptide, known as lipid I. The chain is Phospho-N-acetylmuramoyl-pentapeptide-transferase from Prochlorococcus marinus (strain NATL2A).